The sequence spans 81 residues: Photosystem I iron-sulfur center (81 aa).

4Fe-4S ferredoxin-type domains are found at residues 2–31 (VHVVKIYDTCIGCTQCVRACPCDVLEMVPW) and 39–68 (IASSPRTEDCIGCKRCETACPTDFLSIRVY). [4Fe-4S] cluster-binding residues include Cys11, Cys14, Cys17, Cys21, Cys48, Cys51, Cys54, and Cys58.

As to quaternary structure, the eukaryotic PSI reaction center is composed of at least 11 subunits. Requires [4Fe-4S] cluster as cofactor.

It is found in the plastid. The protein localises to the chloroplast thylakoid membrane. The enzyme catalyses reduced [plastocyanin] + hnu + oxidized [2Fe-2S]-[ferredoxin] = oxidized [plastocyanin] + reduced [2Fe-2S]-[ferredoxin]. Its function is as follows. Apoprotein for the two 4Fe-4S centers FA and FB of photosystem I (PSI); essential for photochemical activity. FB is the terminal electron acceptor of PSI, donating electrons to ferredoxin. The C-terminus interacts with PsaA/B/D and helps assemble the protein into the PSI complex. Required for binding of PsaD and PsaE to PSI. PSI is a plastocyanin/cytochrome c6-ferredoxin oxidoreductase, converting photonic excitation into a charge separation, which transfers an electron from the donor P700 chlorophyll pair to the spectroscopically characterized acceptors A0, A1, FX, FA and FB in turn. The chain is Photosystem I iron-sulfur center from Cyanidium caldarium (Red alga).